Consider the following 331-residue polypeptide: 2-hydroxyacid dehydrogenase homolog (331 aa).

NAD(+) contacts are provided by residues 154–155, 232–234, and D258; these read KI and TSR. R234 is an active-site residue. E263 is a catalytic residue. The active-site Proton donor is the H295. 295–298 contributes to the NAD(+) binding site; it reads HQAF.

The protein belongs to the D-isomer specific 2-hydroxyacid dehydrogenase family.

The polypeptide is 2-hydroxyacid dehydrogenase homolog (ddh) (Haemophilus influenzae (strain ATCC 51907 / DSM 11121 / KW20 / Rd)).